The chain runs to 289 residues: Glycine--tRNA ligase alpha subunit (289 aa).

It belongs to the class-II aminoacyl-tRNA synthetase family. As to quaternary structure, tetramer of two alpha and two beta subunits.

The protein resides in the cytoplasm. The catalysed reaction is tRNA(Gly) + glycine + ATP = glycyl-tRNA(Gly) + AMP + diphosphate. The sequence is that of Glycine--tRNA ligase alpha subunit from Rickettsia felis (strain ATCC VR-1525 / URRWXCal2) (Rickettsia azadi).